A 445-amino-acid chain; its full sequence is 3-phosphoshikimate 1-carboxyvinyltransferase (445 aa).

Positions 1 to 25 (MTDSNQPMPLQARKSGALHGTARVP) are disordered. Residues lysine 28, serine 29, and arginine 33 each coordinate 3-phosphoshikimate. Lysine 28 serves as a coordination point for phosphoenolpyruvate. Residues glycine 101 and arginine 129 each contribute to the phosphoenolpyruvate site. 3-phosphoshikimate-binding residues include serine 175, glutamine 177, aspartate 328, and lysine 355. Position 177 (glutamine 177) interacts with phosphoenolpyruvate. Aspartate 328 (proton acceptor) is an active-site residue. Arginine 359 and arginine 402 together coordinate phosphoenolpyruvate.

This sequence belongs to the EPSP synthase family. As to quaternary structure, monomer.

Its subcellular location is the cytoplasm. The catalysed reaction is 3-phosphoshikimate + phosphoenolpyruvate = 5-O-(1-carboxyvinyl)-3-phosphoshikimate + phosphate. It participates in metabolic intermediate biosynthesis; chorismate biosynthesis; chorismate from D-erythrose 4-phosphate and phosphoenolpyruvate: step 6/7. Its function is as follows. Catalyzes the transfer of the enolpyruvyl moiety of phosphoenolpyruvate (PEP) to the 5-hydroxyl of shikimate-3-phosphate (S3P) to produce enolpyruvyl shikimate-3-phosphate and inorganic phosphate. This is 3-phosphoshikimate 1-carboxyvinyltransferase from Rhodopseudomonas palustris (strain ATCC BAA-98 / CGA009).